The primary structure comprises 377 residues: MLNTFGDTFRVTTWGESHGKALGAVIDGCPSNLPLTENDIQYELNRRRPGYSLFSTPRKEEDEVEILSGIFEGKTTGTPISCIVYNKSQQSKDYTAIKDTPRPGHADLSYQLKYGNYDYRGGGRSSGRTTIGNVIGGAIAKKLIEYTHKIKVIGYTTEIGTIKGDFNYYNNPEFFESDLNIQKLSNQIEDSVLRCPSTNSNEMNEYVFKAIDGKDSVGGVVEVVIYGLPKGIGNPIFNKLEGRLSSAVMSINSIKGFEVGKGFESSRLFGSEMNDEFYFKNGIICPKTNNAGGILGGISTGAPVVIRASIKPTPSISKTQETVNIKTLETVPIKIGGRHDPIIVPRVIPVIESMVSITIADLMISSGFINPSKLSNI.

NADP(+) is bound at residue R47. FMN is bound by residues 124–126 (RSS), 252–253 (NS), G296, 311–315 (KPTPS), and R338.

It belongs to the chorismate synthase family. The cofactor is FMNH2.

The catalysed reaction is 5-O-(1-carboxyvinyl)-3-phosphoshikimate = chorismate + phosphate. Its pathway is metabolic intermediate biosynthesis; chorismate biosynthesis; chorismate from D-erythrose 4-phosphate and phosphoenolpyruvate: step 7/7. In terms of biological role, catalyzes the anti-1,4-elimination of the C-3 phosphate and the C-6 proR hydrogen from 5-enolpyruvylshikimate-3-phosphate (EPSP) to yield chorismate, which is the branch point compound that serves as the starting substrate for the three terminal pathways of aromatic amino acid biosynthesis. This reaction introduces a second double bond into the aromatic ring system. The protein is Chorismate synthase of Methanococcus vannielii (strain ATCC 35089 / DSM 1224 / JCM 13029 / OCM 148 / SB).